The sequence spans 150 residues: Transcriptional repressor NrdR (150 aa).

A zinc finger spans residues 3-34 (CPFCGYEETKVLDSRPVSNGTSIRRRRECLQC). The 91-residue stretch at 49–139 (IRIIKKDGRR…VYKEFRDLDS (91 aa)) folds into the ATP-cone domain.

This sequence belongs to the NrdR family. The cofactor is Zn(2+).

Functionally, negatively regulates transcription of bacterial ribonucleotide reductase nrd genes and operons by binding to NrdR-boxes. The protein is Transcriptional repressor NrdR of Petrotoga mobilis (strain DSM 10674 / SJ95).